The primary structure comprises 185 residues: Ovomucoid (185 aa).

3 Kazal-like domains span residues 1 to 63, 64 to 128, and 131 to 185; these read VEVD…ECRE, AVPM…ECRK, and AAVS…FGKC. 9 disulfides stabilise this stretch: Cys5-Cys43, Cys22-Cys40, Cys30-Cys61, Cys69-Cys108, Cys86-Cys105, Cys94-Cys126, Cys137-Cys167, Cys145-Cys164, and Cys153-Cys185. A glycan (N-linked (GlcNAc...) asparagine) is linked at Asn174.

The protein localises to the secreted. In Meleagris gallopavo (Wild turkey), this protein is Ovomucoid.